The following is a 385-amino-acid chain: 28S rRNA (uridine-N(3))-methyltransferase (385 aa).

2 disordered regions span residues 1-35 (MAER…KKKW) and 47-72 (QRAQ…NQGR). 2 stretches are compositionally biased toward basic and acidic residues: residues 15 to 35 (HGQR…KKKW) and 47 to 58 (QRAQEEEAKRQE). 4 residues coordinate S-adenosyl-L-methionine: Arg-293, Gly-313, Asn-342, and Thr-343.

The protein belongs to the class IV-like SAM-binding methyltransferase superfamily. As to quaternary structure, interacts with INCA1.

The protein localises to the cytoplasm. The protein resides in the cytoskeleton. Its subcellular location is the spindle. It localises to the chromosome. It is found in the centromere. The protein localises to the kinetochore. The protein resides in the microtubule organizing center. Its subcellular location is the centrosome. It carries out the reaction uridine in 28S rRNA + S-adenosyl-L-methionine = N(3)-methyluridine in 28S rRNA + S-adenosyl-L-homocysteine + H(+). S-adenosyl-L-methionine-dependent methyltransferase that specifically methylates the N3 position of a uridine in 28S rRNA. Required for association of the centrosomes with the poles of the bipolar mitotic spindle during metaphase. Also involved in chromosome alignment. May promote centrosome maturation probably by recruiting A-kinase anchor protein AKAP9 to centrosomes in early mitosis. Binds specifically to miRNA MIR145 hairpin, regulates MIR145 expression at a postranscriptional level. The chain is 28S rRNA (uridine-N(3))-methyltransferase from Mus musculus (Mouse).